A 550-amino-acid chain; its full sequence is Glucose-6-phosphate isomerase (550 aa).

The active-site Proton donor is the Glu-356. Residues His-387 and Lys-515 contribute to the active site.

Belongs to the GPI family.

The protein resides in the cytoplasm. It catalyses the reaction alpha-D-glucose 6-phosphate = beta-D-fructose 6-phosphate. The protein operates within carbohydrate biosynthesis; gluconeogenesis. It functions in the pathway carbohydrate degradation; glycolysis; D-glyceraldehyde 3-phosphate and glycerone phosphate from D-glucose: step 2/4. In terms of biological role, catalyzes the reversible isomerization of glucose-6-phosphate to fructose-6-phosphate. In Vibrio vulnificus (strain YJ016), this protein is Glucose-6-phosphate isomerase.